A 443-amino-acid polypeptide reads, in one-letter code: MSKLRVMSLFSGIGAFEAALRNIGVDYELIGFSEIDKYAIKSYCAIHNVSETLNVGDISKAKKDNIPYFDLLTSGFPCPTFSVAGGRDGMEYKCSNCSHEHLITYEDYKKGVKCPKCEAVSKAKDERGTLFFETALLAEEKKPKFVILENVKGLINSGNGQVLRIISETMNNIGYRIDLELLNSKFFNVPQNRERVYIIGIREDLVENEQWVVGQKRNDVLSKGKKRLQEINIKSFNFKWPLQDTVTKRLREILEDFVDEKYYLNEEKTKKLVEQLGTAPLQKQEVREPLMVGHVDLKGHDAIKRVYSPEGLSPTLTTMGGGHREPKIAEKQKEVRAVLTPEREEKRQNGRRFKENGEPAFTVNTIDRHGVAIGEYPKYKIRKLSPLECWRLQAFDDEDFEKAFAAGISNSQLYKQAGNSITVSVLESIFQELIHTYVNKESE.

Positions 4-440 (LRVMSLFSGI…QELIHTYVNK (437 aa)) constitute an SAM-dependent MTase C5-type domain. The active site involves Cys78.

Belongs to the class I-like SAM-binding methyltransferase superfamily. C5-methyltransferase family.

It catalyses the reaction a 2'-deoxycytidine in DNA + S-adenosyl-L-methionine = a 5-methyl-2'-deoxycytidine in DNA + S-adenosyl-L-homocysteine + H(+). In terms of biological role, a putative methylase, recognizes the double-stranded sequence 5'-GGCC-3', methylates C-?. There is no known cognate restriction enzyme. The sequence is that of Putative type II methyltransferase M.BsuMIIP (mtbP) from Bacillus subtilis (strain 168).